The chain runs to 197 residues: MRQIILASASPRRKELLKQLIGDNFLVYASSYEESPCPGMHPKELLLKHSAEKARDVAKHFNSGLVISADTSVFFNGELLGKPKSSEEAEKMLKLLSGQRFLVITGLTVLDLDSGKEISELKSTTVWMDKISNEQISAYVRTGEPLDKAGAFAVQGKGAAFVEKIEGDFFNVVGLPLFRLGKILQKAGVSIFEEGLS.

The active-site Proton acceptor is the D70.

This sequence belongs to the Maf family. YhdE subfamily. A divalent metal cation is required as a cofactor.

It is found in the cytoplasm. The catalysed reaction is dTTP + H2O = dTMP + diphosphate + H(+). It catalyses the reaction UTP + H2O = UMP + diphosphate + H(+). In terms of biological role, nucleoside triphosphate pyrophosphatase that hydrolyzes dTTP and UTP. May have a dual role in cell division arrest and in preventing the incorporation of modified nucleotides into cellular nucleic acids. This is dTTP/UTP pyrophosphatase from Methanosarcina barkeri (strain Fusaro / DSM 804).